The chain runs to 330 residues: Transcription factor TGA6 (330 aa).

The segment covering 1–13 has biased composition (polar residues); that stretch reads MADTSSRTDVSTD. The interval 1 to 45 is disordered; it reads MADTSSRTDVSTDGDTDHRDLGSDRGHMHAAASDSSDRSKDKLDQ. 2 stretches are compositionally biased toward basic and acidic residues: residues 15 to 27 and 35 to 45; these read DTDHRDLGSDRGH and SSDRSKDKLDQ. A bZIP domain is found at 44–107; it reads DQKTLRRLAQ…SSGDQAHSTG (64 aa). 2 coiled-coil regions span residues 45 to 142 and 217 to 233; these read QKTL…HAGD and INSLQQTSQQAEDALSQ. The tract at residues 46-66 is basic motif; it reads KTLRRLAQNREAARKSRLRKK. A leucine-zipper region spans residues 72 to 86; the sequence is LENSRLKLTQLEQEL. One can recognise a DOG1 domain in the interval 111–327; it reads ALAFDAEHSR…RALSSLWLAR (217 aa).

The protein belongs to the bZIP family. As to quaternary structure, binds DNA as a dimer. Interacts with NPR1, NPR3 and NPR4. Interacts with GRXC9/GRX480. As to expression, expressed predominantly in roots and flowers.

The protein resides in the nucleus. Transcriptional activator that binds specifically to the DNA sequence 5'-TGACG-3'. Recognizes ocs elements like the as-1 motif of the cauliflower mosaic virus 35S promoter. Binding to the as-1-like cis elements mediate auxin- and salicylic acid-inducible transcription. May be involved in the induction of the systemic acquired resistance (SAR) via its interaction with NPR1. Could also bind to the Hex-motif (5'-TGACGTGG-3') another cis-acting element found in plant histone promoters. In Arabidopsis thaliana (Mouse-ear cress), this protein is Transcription factor TGA6 (TGA6).